A 432-amino-acid chain; its full sequence is Trigger factor (432 aa).

Residues 163–248 (GDIAVIDFEG…LKALNKKELP (86 aa)) form the PPIase FKBP-type domain.

The protein belongs to the FKBP-type PPIase family. Tig subfamily.

Its subcellular location is the cytoplasm. The catalysed reaction is [protein]-peptidylproline (omega=180) = [protein]-peptidylproline (omega=0). In terms of biological role, involved in protein export. Acts as a chaperone by maintaining the newly synthesized protein in an open conformation. Functions as a peptidyl-prolyl cis-trans isomerase. In Thermoanaerobacter pseudethanolicus (strain ATCC 33223 / 39E) (Clostridium thermohydrosulfuricum), this protein is Trigger factor.